Here is a 237-residue protein sequence, read N- to C-terminus: Purine nucleoside phosphorylase DeoD-type (237 aa).

Position 4 (His4) interacts with a purine D-ribonucleoside. Phosphate is bound by residues Gly20, Arg24, Arg43, and 87–90; that span reads RVGT. A purine D-ribonucleoside is bound by residues 179–181 and 203–204; these read EME and SD. Residue Asp204 is the Proton donor of the active site.

It belongs to the PNP/UDP phosphorylase family. As to quaternary structure, homohexamer; trimer of homodimers.

The enzyme catalyses a purine D-ribonucleoside + phosphate = a purine nucleobase + alpha-D-ribose 1-phosphate. It carries out the reaction a purine 2'-deoxy-D-ribonucleoside + phosphate = a purine nucleobase + 2-deoxy-alpha-D-ribose 1-phosphate. Functionally, catalyzes the reversible phosphorolytic breakdown of the N-glycosidic bond in the beta-(deoxy)ribonucleoside molecules, with the formation of the corresponding free purine bases and pentose-1-phosphate. The chain is Purine nucleoside phosphorylase DeoD-type from Streptococcus uberis (strain ATCC BAA-854 / 0140J).